A 477-amino-acid chain; its full sequence is Argininosuccinate lyase (477 aa).

This sequence belongs to the lyase 1 family. Argininosuccinate lyase subfamily.

It localises to the cytoplasm. It carries out the reaction 2-(N(omega)-L-arginino)succinate = fumarate + L-arginine. It participates in amino-acid biosynthesis; L-arginine biosynthesis; L-arginine from L-ornithine and carbamoyl phosphate: step 3/3. The sequence is that of Argininosuccinate lyase from Corynebacterium glutamicum (strain R).